The sequence spans 838 residues: Protein translocase subunit SecA (838 aa).

Residues Q86, 104 to 108, and D493 each bind ATP; that span reads GEGKT. A disordered region spans residues 793 to 838; that stretch reads NTQAVSGGEDSGKKKTKKPVVKSNTVKRNDPCPCGSGKKYKNCHGQ. Positions 824, 826, 835, and 836 each coordinate Zn(2+).

It belongs to the SecA family. Monomer and homodimer. Part of the essential Sec protein translocation apparatus which comprises SecA, SecYEG and auxiliary proteins SecDF. Other proteins may also be involved. Zn(2+) serves as cofactor.

The protein localises to the cell membrane. Its subcellular location is the cytoplasm. It carries out the reaction ATP + H2O + cellular proteinSide 1 = ADP + phosphate + cellular proteinSide 2.. Part of the Sec protein translocase complex. Interacts with the SecYEG preprotein conducting channel. Has a central role in coupling the hydrolysis of ATP to the transfer of proteins into and across the cell membrane, serving as an ATP-driven molecular motor driving the stepwise translocation of polypeptide chains across the membrane. In Oceanobacillus iheyensis (strain DSM 14371 / CIP 107618 / JCM 11309 / KCTC 3954 / HTE831), this protein is Protein translocase subunit SecA.